The primary structure comprises 338 residues: MGPPLSPRESARFVAENSRDVLVDHEGVRRAAELLLPAAAAWRVEQWKSLHELNPRGADEAALGWVFLVDSLNFSFWAEREDSKCAVRYGGTPYTGYWALCAAVNRALDQGIPITSASYYATVSLEQVRDIFRSDTAVPMPLMEERHRILNETGKILLEKFGGSFLNCVQKSGRSAQKLMQLIVENFPSYRDEAEFEGKRIAFYKRAQILVADTWSVLEGKGDGCFEDISSITMFADYRLPQILVYLGALKYSDELLKKLLKGEMLLNGDKQEVEIRGCSIWCVELIRDRLLELLEKGENSPVEINSVLLDYHLWDYAREHREDMKGVPFHRTRCIYY.

An N-acetylmethionine modification is found at Met1. Residues His51, Phe235, Asp237, Asp311, Tyr312, and Asp316 each coordinate queuine. The Nucleophile or transition state stabilizer role is filled by Asp237.

The protein belongs to the QNG1 protein family. In terms of tissue distribution, highly expressed in liver.

The enzyme catalyses queuosine 5'-phosphate + H2O = queuine + D-ribose 5-phosphate. Catalyzes the hydrolysis of queuosine 5'-phosphate, releasing the nucleobase queuine (q). Is required for salvage of queuine from exogenous queuosine (Q) that is imported and then converted to queuosine 5'-phosphate intracellularly. The chain is Queuosine 5'-phosphate N-glycosylase/hydrolase from Mus musculus (Mouse).